Here is a 205-residue protein sequence, read N- to C-terminus: MAASTASHRPIKGILKNKTSTTSSMVASAEQPRRSVDEELSKKSQKWDEINILATYHPADKGYGLMKIDEPSPPYHSMMGDDEDACRDTETTEAMAPDILAKKLAAAEGLEPKYRIQEQESSGEEDSDLSPEEREKKRQFEMRRKLHYNEGLNIKLARQLISKDLHDDDEDEEMLETADGESMNTEESNQGSTPSDQQQNKLRSS.

Residues 1 to 44 (MAASTASHRPIKGILKNKTSTTSSMVASAEQPRRSVDEELSKKS) are disordered. Ala2 bears the N-acetylalanine mark. Required for binding PPP1CC regions lie at residues 12–17 (KGILKN) and 43–55 (KSQKWDEINILAT). Positions 17 to 26 (NKTSTTSSMV) are enriched in polar residues. The segment covering 31–44 (QPRRSVDEELSKKS) has biased composition (basic and acidic residues). Ser44 carries the phosphoserine modification. 2 positions are modified to phosphothreonine: Thr89 and Thr92. The segment at 111–142 (EPKYRIQEQESSGEEDSDLSPEEREKKRQFEM) is disordered. Phosphoserine is present on residues Ser121, Ser122, Ser127, and Ser130. Positions 121–130 (SSGEEDSDLS) are enriched in acidic residues. Residues 131-142 (PEEREKKRQFEM) are compositionally biased toward basic and acidic residues. A required for binding PPP1CC catalytic center, displacing metal ions and inhibition of PPP1CC catalytic activity region spans residues 147–150 (HYNE). The tract at residues 163–205 (KDLHDDDEDEEMLETADGESMNTEESNQGSTPSDQQQNKLRSS) is disordered. A compositionally biased stretch (acidic residues) spans 167–179 (DDDEDEEMLETAD). The segment covering 182-205 (SMNTEESNQGSTPSDQQQNKLRSS) has biased composition (polar residues).

Belongs to the protein phosphatase inhibitor 2 family. Interacts with PPP1CC. As to expression, only detected in spermatozoa, both heads and tails.

Functionally, inhibitor of protein-phosphatase 1. This chain is Protein phosphatase inhibitor 2 family member B, found in Homo sapiens (Human).